We begin with the raw amino-acid sequence, 151 residues long: Ubiquitin-conjugating enzyme E2 2 (151 aa).

Positions 4–150 (AARRRLMRDF…VRETVERSWE (147 aa)) constitute a UBC core domain. Catalysis depends on Cys-88, which acts as the Glycyl thioester intermediate.

The protein belongs to the ubiquitin-conjugating enzyme family.

Its subcellular location is the cytoplasm. It is found in the nucleus. The enzyme catalyses S-ubiquitinyl-[E1 ubiquitin-activating enzyme]-L-cysteine + [E2 ubiquitin-conjugating enzyme]-L-cysteine = [E1 ubiquitin-activating enzyme]-L-cysteine + S-ubiquitinyl-[E2 ubiquitin-conjugating enzyme]-L-cysteine.. It functions in the pathway protein modification; protein ubiquitination. Catalyzes the covalent attachment of ubiquitin to other proteins. Plays a role in transcription regulation by catalyzing the monoubiquitination of histone H2B to form H2BK123ub1. H2BK123ub1 gives a specific tag for epigenetic transcriptional activation and is also a prerequisite for H3K4me and H3K79me formation. Also involved in postreplication repair of UV-damaged DNA, in N-end rule-dependent protein degradation and in sporulation. This Trichoderma harzianum (Hypocrea lixii) protein is Ubiquitin-conjugating enzyme E2 2 (UBC2).